The following is a 496-amino-acid chain: UDP-N-acetylmuramate--L-alanine ligase (496 aa).

122–128 (GTHGKTT) contributes to the ATP binding site.

The protein belongs to the MurCDEF family.

Its subcellular location is the cytoplasm. The enzyme catalyses UDP-N-acetyl-alpha-D-muramate + L-alanine + ATP = UDP-N-acetyl-alpha-D-muramoyl-L-alanine + ADP + phosphate + H(+). Its pathway is cell wall biogenesis; peptidoglycan biosynthesis. In terms of biological role, cell wall formation. The protein is UDP-N-acetylmuramate--L-alanine ligase of Mycobacterium avium (strain 104).